The primary structure comprises 213 residues: Ribonuclease HII (213 aa).

The RNase H type-2 domain occupies 18 to 213 (GLYAGVDEVG…RPVKERLAKN (196 aa)). 3 residues coordinate a divalent metal cation: Asp-24, Glu-25, and Asp-116.

Belongs to the RNase HII family. Mn(2+) is required as a cofactor. The cofactor is Mg(2+).

It localises to the cytoplasm. It catalyses the reaction Endonucleolytic cleavage to 5'-phosphomonoester.. Endonuclease that specifically degrades the RNA of RNA-DNA hybrids. This chain is Ribonuclease HII, found in Shewanella sediminis (strain HAW-EB3).